The chain runs to 288 residues: Nucleotide-binding protein APP7_0339 (288 aa).

ATP is bound at residue G8–S15. GTP is bound at residue D56–N59.

It belongs to the RapZ-like family.

Displays ATPase and GTPase activities. The chain is Nucleotide-binding protein APP7_0339 from Actinobacillus pleuropneumoniae serotype 7 (strain AP76).